Here is a 352-residue protein sequence, read N- to C-terminus: Anthranilate phosphoribosyltransferase (352 aa).

Residues G94, 97 to 98 (GS), S102, 104 to 107 (NIST), 122 to 130 (KHGNRAVSS), and S134 each bind 5-phospho-alpha-D-ribose 1-diphosphate. G94 contributes to the anthranilate binding site. S106 contacts Mg(2+). N125 provides a ligand contact to anthranilate. R180 is an anthranilate binding site. Mg(2+) is bound by residues D239 and E240.

This sequence belongs to the anthranilate phosphoribosyltransferase family. In terms of assembly, homodimer. Mg(2+) is required as a cofactor.

It catalyses the reaction N-(5-phospho-beta-D-ribosyl)anthranilate + diphosphate = 5-phospho-alpha-D-ribose 1-diphosphate + anthranilate. It participates in amino-acid biosynthesis; L-tryptophan biosynthesis; L-tryptophan from chorismate: step 2/5. Catalyzes the transfer of the phosphoribosyl group of 5-phosphorylribose-1-pyrophosphate (PRPP) to anthranilate to yield N-(5'-phosphoribosyl)-anthranilate (PRA). The polypeptide is Anthranilate phosphoribosyltransferase (Citrifermentans bemidjiense (strain ATCC BAA-1014 / DSM 16622 / JCM 12645 / Bem) (Geobacter bemidjiensis)).